The primary structure comprises 347 residues: Vitellogenin-3 (347 aa).

An N-terminal signal peptide occupies residues 1–15; it reads MRGFILALVLALVGA. Asn-80 carries an N-linked (GlcNAc...) asparagine glycan. The span at 104–118 shows a compositional bias: low complexity; sequence PSATPLSSSSSTDSS. Disordered stretches follow at residues 104-174 and 200-234; these read PSAT…DKHC and QDPR…MFLG. Over residues 124 to 133 the composition is skewed to basic and acidic residues; that stretch reads PGNKRDKDEI. Residues 144 to 163 are compositionally biased toward low complexity; that stretch reads SSSSSSSSSTGSGSSKTCSS. The span at 164–174 shows a compositional bias: basic and acidic residues; that stretch reads SREDSSRDKHC. Asn-208 is a glycosylation site (N-linked (GlcNAc...) asparagine). Over residues 209–219 the composition is skewed to low complexity; the sequence is SSISSSSSSSS.

Phosvitin, an egg yolk storage protein, is one of the most highly phosphorylated (10%) proteins in nature. Post-translationally, cathepsin D is responsible for intraoocytic processing of vitellogenin. In terms of processing, may contain intrachain disulfide bonds. Produced by the liver, secreted into the blood and then sequestered by receptor mediated endocytosis into growing oocytes, where it is generally cleaved, giving rise to the respective yolk components.

Its function is as follows. Precursor of the egg-yolk proteins that are sources of nutrients during early development of oviparous organisms. In terms of biological role, phosvitin is believed to be of importance in sequestering calcium, iron and other cations for the developing embryo. This chain is Vitellogenin-3 (VTG3), found in Gallus gallus (Chicken).